A 177-amino-acid polypeptide reads, in one-letter code: ATP synthase subunit delta (177 aa).

It belongs to the ATPase delta chain family. F-type ATPases have 2 components, F(1) - the catalytic core - and F(0) - the membrane proton channel. F(1) has five subunits: alpha(3), beta(3), gamma(1), delta(1), epsilon(1). F(0) has three main subunits: a(1), b(2) and c(10-14). The alpha and beta chains form an alternating ring which encloses part of the gamma chain. F(1) is attached to F(0) by a central stalk formed by the gamma and epsilon chains, while a peripheral stalk is formed by the delta and b chains.

It is found in the cell inner membrane. In terms of biological role, f(1)F(0) ATP synthase produces ATP from ADP in the presence of a proton or sodium gradient. F-type ATPases consist of two structural domains, F(1) containing the extramembraneous catalytic core and F(0) containing the membrane proton channel, linked together by a central stalk and a peripheral stalk. During catalysis, ATP synthesis in the catalytic domain of F(1) is coupled via a rotary mechanism of the central stalk subunits to proton translocation. Functionally, this protein is part of the stalk that links CF(0) to CF(1). It either transmits conformational changes from CF(0) to CF(1) or is implicated in proton conduction. The polypeptide is ATP synthase subunit delta (Aliivibrio salmonicida (strain LFI1238) (Vibrio salmonicida (strain LFI1238))).